A 273-amino-acid chain; its full sequence is Putative inactive beta-glucuronidase protein GUSBP11 (273 aa).

Residues 1–20 (MTAAETGRGKPRLGGGSGLG) form a disordered region.

The protein belongs to the glycosyl hydrolase 2 family.

This Homo sapiens (Human) protein is Putative inactive beta-glucuronidase protein GUSBP11 (GUSBP11).